Consider the following 316-residue polypeptide: Pantothenate kinase (316 aa).

Position 95-102 (95-102 (GSVAVGKS)) interacts with ATP.

Belongs to the prokaryotic pantothenate kinase family.

It is found in the cytoplasm. It catalyses the reaction (R)-pantothenate + ATP = (R)-4'-phosphopantothenate + ADP + H(+). Its pathway is cofactor biosynthesis; coenzyme A biosynthesis; CoA from (R)-pantothenate: step 1/5. The protein is Pantothenate kinase of Shewanella loihica (strain ATCC BAA-1088 / PV-4).